The chain runs to 423 residues: Dihydroorotase (423 aa).

Zn(2+) is bound by residues His60 and His62. Substrate is bound by residues 62-64 and Asn94; that span reads HFR. The Zn(2+) site is built by Asp152, His179, His232, and Asp305. Residue Asp305 is part of the active site. Substrate-binding positions include His309 and 323-324; that span reads PG.

It belongs to the metallo-dependent hydrolases superfamily. DHOase family. Class I DHOase subfamily. It depends on Zn(2+) as a cofactor.

The enzyme catalyses (S)-dihydroorotate + H2O = N-carbamoyl-L-aspartate + H(+). It participates in pyrimidine metabolism; UMP biosynthesis via de novo pathway; (S)-dihydroorotate from bicarbonate: step 3/3. Functionally, catalyzes the reversible cyclization of carbamoyl aspartate to dihydroorotate. The chain is Dihydroorotase from Sulfurihydrogenibium sp. (strain YO3AOP1).